The primary structure comprises 210 residues: Probable GTP-binding protein EngB (210 aa).

One can recognise an EngB-type G domain in the interval 25–199 (TGIEVAFAGR…RQKLDSWFNE (175 aa)). GTP contacts are provided by residues 33–40 (GRSNAGKS), 60–64 (GRTQL), 78–81 (DLPG), 145–148 (TKAD), and 178–180 (FSS). Ser-40 and Thr-62 together coordinate Mg(2+).

Belongs to the TRAFAC class TrmE-Era-EngA-EngB-Septin-like GTPase superfamily. EngB GTPase family. Mg(2+) is required as a cofactor.

In terms of biological role, necessary for normal cell division and for the maintenance of normal septation. This chain is Probable GTP-binding protein EngB, found in Klebsiella pneumoniae (strain 342).